Reading from the N-terminus, the 308-residue chain is MRKVIICSPRGFCAGVIRAVQTVERALEKWGAPIYVKHEIVHNRHVVDKLRAKGAIFIEDLQEVPCNSRVIYSAHGVPPSVREEAKERGLITIDATCGLVTKIHSAVKMYARRGYLIILIGKRKHVEVIGICGEAPDKITVVENIAEVEALTFSTKDLLFYVTQTTLSMDDSADMIAALKARYPQIITLPSSSICYATQNRQSALRNILPKVEFVYVIGDPKSSNSNQLKAVAARRGVVARLVNNPEEITDEILQYSGNIGVTAGASTPEDVVQACLTKLQKLIPTLVVETDLFVEEDTIFQLPKELQ.

Cys13 contributes to the [4Fe-4S] cluster binding site. The (2E)-4-hydroxy-3-methylbut-2-enyl diphosphate site is built by His42 and His75. His42 and His75 together coordinate dimethylallyl diphosphate. Residues His42 and His75 each coordinate isopentenyl diphosphate. Cys97 provides a ligand contact to [4Fe-4S] cluster. His125 serves as a coordination point for (2E)-4-hydroxy-3-methylbut-2-enyl diphosphate. A dimethylallyl diphosphate-binding site is contributed by His125. His125 lines the isopentenyl diphosphate pocket. The active-site Proton donor is the Glu127. Thr165 contributes to the (2E)-4-hydroxy-3-methylbut-2-enyl diphosphate binding site. Cys195 serves as a coordination point for [4Fe-4S] cluster. (2E)-4-hydroxy-3-methylbut-2-enyl diphosphate contacts are provided by Ser223, Ser224, Asn225, and Ser267. Dimethylallyl diphosphate is bound by residues Ser223, Ser224, Asn225, and Ser267. 4 residues coordinate isopentenyl diphosphate: Ser223, Ser224, Asn225, and Ser267.

Belongs to the IspH family. [4Fe-4S] cluster serves as cofactor.

It carries out the reaction isopentenyl diphosphate + 2 oxidized [2Fe-2S]-[ferredoxin] + H2O = (2E)-4-hydroxy-3-methylbut-2-enyl diphosphate + 2 reduced [2Fe-2S]-[ferredoxin] + 2 H(+). The catalysed reaction is dimethylallyl diphosphate + 2 oxidized [2Fe-2S]-[ferredoxin] + H2O = (2E)-4-hydroxy-3-methylbut-2-enyl diphosphate + 2 reduced [2Fe-2S]-[ferredoxin] + 2 H(+). The protein operates within isoprenoid biosynthesis; dimethylallyl diphosphate biosynthesis; dimethylallyl diphosphate from (2E)-4-hydroxy-3-methylbutenyl diphosphate: step 1/1. It functions in the pathway isoprenoid biosynthesis; isopentenyl diphosphate biosynthesis via DXP pathway; isopentenyl diphosphate from 1-deoxy-D-xylulose 5-phosphate: step 6/6. Its function is as follows. Catalyzes the conversion of 1-hydroxy-2-methyl-2-(E)-butenyl 4-diphosphate (HMBPP) into a mixture of isopentenyl diphosphate (IPP) and dimethylallyl diphosphate (DMAPP). Acts in the terminal step of the DOXP/MEP pathway for isoprenoid precursor biosynthesis. In Chlamydia muridarum (strain MoPn / Nigg), this protein is 4-hydroxy-3-methylbut-2-enyl diphosphate reductase.